The sequence spans 551 residues: MRPQNVAGVAGTGALIMAAGALADQTVFHPTSLTAPFIEQFIESIPDSRWTVSRATKQTPVGDEIFSYVGQWEVEEPEVYPGIPGDKGLVLKTKAAHHAISTLFTEPIDPKGKSLVVQYEVKLQKGLECGGAYIKLLTDQQDEGLRAGEDYTDKTPFTIMFGPDKCGSTNKVHFIFRHKNPLTGEWEEKHLKNPPSPKITKTTALYTLITNPDQTFEILINDESVRKGSLLEDFDPAVNPPKEIDDPEDFKPETWVDEAEIEDITATKPDDWDEDAPMMITDTAAVKPVDWLEEEPETIPDPEAEKPEEWDDEEDGDWIPPMVPNPKCEDVSGCGPWTAPKIRNPDYKGKWTVPRIPNPDYKGPWAPRKIANPAFFEDLHPSDFTKIGGVGIELWTMTEDILFDNLYIGHDAAQAKKFAEETYHVKKPIEKEAEGSNEDELEEPSSLVEKVQLKVYEFLHLATFDIAQAIKQMPEVAAGLAAAVFTLLGMLLALFGFIGSAPTKVKQTTVKTKAVAPVAPAGEEEKKALDQAGVEIPAEGSKKRVTRSTKE.

Residues 1 to 23 (MRPQNVAGVAGTGALIMAAGALA) form the signal peptide. Residues 24–477 (DQTVFHPTSL…QAIKQMPEVA (454 aa)) lie on the Lumenal side of the membrane. Residues 293–315 (EEEPETIPDPEAEKPEEWDDEED) form a disordered region. Residues 478 to 498 (AGLAAAVFTLLGMLLALFGFI) traverse the membrane as a helical segment. Over 499-551 (GSAPTKVKQTTVKTKAVAPVAPAGEEEKKALDQAGVEIPAEGSKKRVTRSTKE) the chain is Cytoplasmic. Residues 526-551 (KKALDQAGVEIPAEGSKKRVTRSTKE) are disordered.

This sequence belongs to the calreticulin family.

Its subcellular location is the endoplasmic reticulum membrane. Endoplasmic reticulum (ER) chaperone that functions to stabilize non-native glycoproteins and retain them in the ER until they are properly folded or targeted for ER associated degradation (ERAD). With co-chaperone DNJ1, coordinately maintains ER homeostasis and contributes to maintenance of cell wall architecture. In Cryptococcus neoformans var. grubii serotype A (strain H99 / ATCC 208821 / CBS 10515 / FGSC 9487) (Filobasidiella neoformans var. grubii), this protein is Calnexin.